Reading from the N-terminus, the 320-residue chain is Lipoyl synthase (320 aa).

A compositionally biased stretch (basic and acidic residues) spans 1 to 24; it reads MIGKLVRDLKIPDQRHPEKAHRPD. The interval 1-30 is disordered; it reads MIGKLVRDLKIPDQRHPEKAHRPDNVQPKK. C60, C65, C71, C86, C90, C93, and S300 together coordinate [4Fe-4S] cluster. The Radical SAM core domain occupies 72–289; the sequence is WSQGHATMMI…EKAAYGKGFL (218 aa).

The protein belongs to the radical SAM superfamily. Lipoyl synthase family. Requires [4Fe-4S] cluster as cofactor.

Its subcellular location is the cytoplasm. It catalyses the reaction [[Fe-S] cluster scaffold protein carrying a second [4Fe-4S](2+) cluster] + N(6)-octanoyl-L-lysyl-[protein] + 2 oxidized [2Fe-2S]-[ferredoxin] + 2 S-adenosyl-L-methionine + 4 H(+) = [[Fe-S] cluster scaffold protein] + N(6)-[(R)-dihydrolipoyl]-L-lysyl-[protein] + 4 Fe(3+) + 2 hydrogen sulfide + 2 5'-deoxyadenosine + 2 L-methionine + 2 reduced [2Fe-2S]-[ferredoxin]. It functions in the pathway protein modification; protein lipoylation via endogenous pathway; protein N(6)-(lipoyl)lysine from octanoyl-[acyl-carrier-protein]: step 2/2. In terms of biological role, catalyzes the radical-mediated insertion of two sulfur atoms into the C-6 and C-8 positions of the octanoyl moiety bound to the lipoyl domains of lipoate-dependent enzymes, thereby converting the octanoylated domains into lipoylated derivatives. This Cereibacter sphaeroides (strain ATCC 17029 / ATH 2.4.9) (Rhodobacter sphaeroides) protein is Lipoyl synthase.